Consider the following 205-residue polypeptide: Casparian strip membrane protein 4 (205 aa).

The Cytoplasmic segment spans residues 1 to 58 (MDIEKTGSRREEEEPIVQKPKLEKGKGKAHVFAPPMNYSRIMEKHKQEKVSMAGWKRG). A helical transmembrane segment spans residues 59–79 (VAIFDFVLRLIAAITAMAAAA). Topologically, residues 80–109 (KMATTEETLPFFTQFLQFSADYTDLPTLSS) are extracellular. Residues 110–130 (FVIVNSIVGGYLTLSLPFSIV) traverse the membrane as a helical segment. The Cytoplasmic segment spans residues 131–148 (CILRPLAVPPRLFLILCD). Residues 149–169 (TAMMGLTMVAASASAAIVYLA) traverse the membrane as a helical segment. The Extracellular segment spans residues 170-205 (HNGNSSSNWLPVCQQFGDFCKERVAPWWLPLLQRLF). N-linked (GlcNAc...) asparagine glycosylation occurs at asparagine 173.

This sequence belongs to the Casparian strip membrane proteins (CASP) family. Homodimer and heterodimers.

It is found in the cell membrane. Regulates membrane-cell wall junctions and localized cell wall deposition. Required for establishment of the Casparian strip membrane domain (CSD) and the subsequent formation of Casparian strips, a cell wall modification of the root endodermis that determines an apoplastic barrier between the intraorganismal apoplasm and the extraorganismal apoplasm and prevents lateral diffusion. This is Casparian strip membrane protein 4 from Raphanus sativus (Radish).